Reading from the N-terminus, the 483-residue chain is Protein nucleotidyltransferase YdiU (483 aa).

ATP is bound by residues glycine 87, glycine 89, arginine 90, lysine 110, aspartate 122, glycine 123, arginine 173, and arginine 180. The active-site Proton acceptor is the aspartate 249. Residues asparagine 250 and aspartate 259 each contribute to the Mg(2+) site. An ATP-binding site is contributed by aspartate 259.

The protein belongs to the SELO family. It depends on Mg(2+) as a cofactor. Requires Mn(2+) as cofactor.

The enzyme catalyses L-seryl-[protein] + ATP = 3-O-(5'-adenylyl)-L-seryl-[protein] + diphosphate. It catalyses the reaction L-threonyl-[protein] + ATP = 3-O-(5'-adenylyl)-L-threonyl-[protein] + diphosphate. It carries out the reaction L-tyrosyl-[protein] + ATP = O-(5'-adenylyl)-L-tyrosyl-[protein] + diphosphate. The catalysed reaction is L-histidyl-[protein] + UTP = N(tele)-(5'-uridylyl)-L-histidyl-[protein] + diphosphate. The enzyme catalyses L-seryl-[protein] + UTP = O-(5'-uridylyl)-L-seryl-[protein] + diphosphate. It catalyses the reaction L-tyrosyl-[protein] + UTP = O-(5'-uridylyl)-L-tyrosyl-[protein] + diphosphate. Its function is as follows. Nucleotidyltransferase involved in the post-translational modification of proteins. It can catalyze the addition of adenosine monophosphate (AMP) or uridine monophosphate (UMP) to a protein, resulting in modifications known as AMPylation and UMPylation. The protein is Protein nucleotidyltransferase YdiU of Pelagibacter ubique (strain HTCC1062).